We begin with the raw amino-acid sequence, 597 residues long: uncharacterized protein (597 aa).

2 helical membrane-spanning segments follow: residues 4-23 (LLLALLLCLAVGTAGGFKIV) and 209-231 (FVSVSAPGFVGVTAAMSSAGIAI).

It is found in the cell membrane. This is an uncharacterized protein from Archaeoglobus fulgidus (strain ATCC 49558 / DSM 4304 / JCM 9628 / NBRC 100126 / VC-16).